The primary structure comprises 172 residues: MDVTIQHPWFKRTLGPFYPSRLFDQFFGEGLFEYDLLPFLSSTISPYYRQSLFRTVLDSGISEVRSDRDKFVIFLDVKHFSPEDLTVKVQDDFVEIHGKHNERQDDHGYISREFHRRYRLPSNVDQSALSCSLSADGMLTFSGPKIQTGLDATHERAIPVAREEKPSSAPSS.

Methionine 1 bears the N-acetylmethionine mark. The interval 1 to 63 (MDVTIQHPWF…RTVLDSGISE (63 aa)) is required for complex formation with BFSP1 and BFSP2. Glutamine 6 carries the deamidated glutamine; partial modification. A Phosphoserine modification is found at serine 45. At glutamine 50 the chain carries Deamidated glutamine; partial. The region spanning 52–163 (LFRTVLDSGI…HERAIPVARE (112 aa)) is the sHSP domain. Lysine 70 carries the N6-acetyllysine modification. The residue at position 90 (glutamine 90) is a Deamidated glutamine; partial. Lysine 99 bears the N6-acetyllysine mark. Position 100 (histidine 100) interacts with Zn(2+). Asparagine 101 carries the post-translational modification Deamidated asparagine; partial. Glutamate 102 and histidine 107 together coordinate Zn(2+). A Phosphoserine modification is found at serine 122. A Deamidated asparagine; partial modification is found at asparagine 123. Glutamine 147 carries the post-translational modification Deamidated glutamine; partial. Histidine 154 provides a ligand contact to Zn(2+). The O-linked (GlcNAc) serine glycan is linked to serine 168.

Belongs to the small heat shock protein (HSP20) family. Heteromer composed of three CRYAA and one CRYAB subunits. Inter-subunit bridging via zinc ions enhances stability, which is crucial as there is no protein turn over in the lens. Can also form homodimers and homotetramers (dimers of dimers) which serve as the building blocks of homooligomers. Within homooligomers, the zinc-binding motif is created from residues of 3 different molecules. His-100 and Glu-102 from one molecule are ligands of the zinc ion, and His-107 and His-154 residues from additional molecules complete the site with tetrahedral coordination geometry. Part of a complex required for lens intermediate filament formation composed of BFSP1, BFSP2 and CRYAA. Acetylation at Lys-70 may increase chaperone activity. Post-translationally, undergoes age-dependent proteolytical cleavage at the C-terminus.

It is found in the cytoplasm. It localises to the nucleus. Its function is as follows. Contributes to the transparency and refractive index of the lens. Acts as a chaperone, preventing aggregation of various proteins under a wide range of stress conditions. Required for the correct formation of lens intermediate filaments as part of a complex composed of BFSP1, BFSP2 and CRYAA. This Macaca mulatta (Rhesus macaque) protein is Alpha-crystallin A chain (CRYAA).